The sequence spans 115 residues: Large ribosomal subunit protein uL22 (115 aa).

The protein belongs to the universal ribosomal protein uL22 family. Part of the 50S ribosomal subunit.

Its function is as follows. This protein binds specifically to 23S rRNA; its binding is stimulated by other ribosomal proteins, e.g. L4, L17, and L20. It is important during the early stages of 50S assembly. It makes multiple contacts with different domains of the 23S rRNA in the assembled 50S subunit and ribosome. In terms of biological role, the globular domain of the protein is located near the polypeptide exit tunnel on the outside of the subunit, while an extended beta-hairpin is found that lines the wall of the exit tunnel in the center of the 70S ribosome. The chain is Large ribosomal subunit protein uL22 from Limosilactobacillus fermentum (strain NBRC 3956 / LMG 18251) (Lactobacillus fermentum).